Consider the following 125-residue polypeptide: Ribonuclease P protein component (125 aa).

It belongs to the RnpA family. Consists of a catalytic RNA component (M1 or rnpB) and a protein subunit.

The enzyme catalyses Endonucleolytic cleavage of RNA, removing 5'-extranucleotides from tRNA precursor.. Functionally, RNaseP catalyzes the removal of the 5'-leader sequence from pre-tRNA to produce the mature 5'-terminus. It can also cleave other RNA substrates such as 4.5S RNA. The protein component plays an auxiliary but essential role in vivo by binding to the 5'-leader sequence and broadening the substrate specificity of the ribozyme. The polypeptide is Ribonuclease P protein component (Rhodococcus jostii (strain RHA1)).